The following is a 347-amino-acid chain: Selenide, water dikinase (347 aa).

Residue Cys17 is part of the active site. ATP-binding positions include Lys20 and 48–50; that span reads TRD. Asp51 is a Mg(2+) binding site. Residues Asp68, Asp91, and 139 to 141 each bind ATP; that span reads GHS. Residue Asp91 coordinates Mg(2+). Mg(2+) is bound at residue Asp227.

It belongs to the selenophosphate synthase 1 family. Class I subfamily. In terms of assembly, homodimer. The cofactor is Mg(2+).

The enzyme catalyses hydrogenselenide + ATP + H2O = selenophosphate + AMP + phosphate + 2 H(+). Functionally, synthesizes selenophosphate from selenide and ATP. This Salmonella typhi protein is Selenide, water dikinase.